Reading from the N-terminus, the 569-residue chain is Oxygen-dependent choline dehydrogenase (569 aa).

9–38 (DYVIIGGGSAGSVLGNRLSEDKDKEVLVLE) is a binding site for FAD. The Proton acceptor role is filled by H475.

The protein belongs to the GMC oxidoreductase family. FAD is required as a cofactor.

The enzyme catalyses choline + A = betaine aldehyde + AH2. It carries out the reaction betaine aldehyde + NAD(+) + H2O = glycine betaine + NADH + 2 H(+). It functions in the pathway amine and polyamine biosynthesis; betaine biosynthesis via choline pathway; betaine aldehyde from choline (cytochrome c reductase route): step 1/1. Its function is as follows. Involved in the biosynthesis of the osmoprotectant glycine betaine. Catalyzes the oxidation of choline to betaine aldehyde and betaine aldehyde to glycine betaine at the same rate. In Staphylococcus aureus (strain MSSA476), this protein is Oxygen-dependent choline dehydrogenase.